Here is a 191-residue protein sequence, read N- to C-terminus: uncharacterized protein (191 aa).

Positions 1–22 (MKSLRLMLCAMPLMLTGCSTMS) are cleaved as a signal peptide.

This is an uncharacterized protein from Escherichia coli (strain K12).